The following is a 103-amino-acid chain: Co-chaperonin GroES (103 aa).

Belongs to the GroES chaperonin family. Heptamer of 7 subunits arranged in a ring. Interacts with the chaperonin GroEL.

Its subcellular location is the plastid. It is found in the cyanelle. In terms of biological role, together with the chaperonin GroEL, plays an essential role in assisting protein folding. The GroEL-GroES system forms a nano-cage that allows encapsulation of the non-native substrate proteins and provides a physical environment optimized to promote and accelerate protein folding. GroES binds to the apical surface of the GroEL ring, thereby capping the opening of the GroEL channel. In Cyanophora paradoxa, this protein is Co-chaperonin GroES.